The following is a 275-amino-acid chain: 2,3,4,5-tetrahydropyridine-2,6-dicarboxylate N-succinyltransferase (275 aa).

It belongs to the transferase hexapeptide repeat family.

It is found in the cytoplasm. The enzyme catalyses (S)-2,3,4,5-tetrahydrodipicolinate + succinyl-CoA + H2O = (S)-2-succinylamino-6-oxoheptanedioate + CoA. Its pathway is amino-acid biosynthesis; L-lysine biosynthesis via DAP pathway; LL-2,6-diaminopimelate from (S)-tetrahydrodipicolinate (succinylase route): step 1/3. This Cupriavidus taiwanensis (strain DSM 17343 / BCRC 17206 / CCUG 44338 / CIP 107171 / LMG 19424 / R1) (Ralstonia taiwanensis (strain LMG 19424)) protein is 2,3,4,5-tetrahydropyridine-2,6-dicarboxylate N-succinyltransferase.